The sequence spans 252 residues: Adenosylcobinamide-GDP ribazoletransferase (252 aa).

The next 7 membrane-spanning stretches (helical) occupy residues leucine 36 to valine 56, phenylalanine 59 to isoleucine 79, valine 109 to threonine 129, proline 133 to valine 153, serine 170 to leucine 192, glycine 199 to threonine 218, and isoleucine 228 to leucine 248.

It belongs to the CobS family. The cofactor is Mg(2+).

It localises to the cell membrane. It catalyses the reaction alpha-ribazole + adenosylcob(III)inamide-GDP = adenosylcob(III)alamin + GMP + H(+). It carries out the reaction alpha-ribazole 5'-phosphate + adenosylcob(III)inamide-GDP = adenosylcob(III)alamin 5'-phosphate + GMP + H(+). Its pathway is cofactor biosynthesis; adenosylcobalamin biosynthesis; adenosylcobalamin from cob(II)yrinate a,c-diamide: step 7/7. Its function is as follows. Joins adenosylcobinamide-GDP and alpha-ribazole to generate adenosylcobalamin (Ado-cobalamin). Also synthesizes adenosylcobalamin 5'-phosphate from adenosylcobinamide-GDP and alpha-ribazole 5'-phosphate. The protein is Adenosylcobinamide-GDP ribazoletransferase of Clostridium acetobutylicum (strain ATCC 824 / DSM 792 / JCM 1419 / IAM 19013 / LMG 5710 / NBRC 13948 / NRRL B-527 / VKM B-1787 / 2291 / W).